Consider the following 64-residue polypeptide: Beta-defensin 5 (64 aa).

Positions 1 to 22 (MRLHHLLLVLLFLVLSAGSGFT) are cleaved as a signal peptide. Glutamine 23 bears the Pyrrolidone carboxylic acid mark. Intrachain disulfides connect cysteine 31–cysteine 60, cysteine 38–cysteine 53, and cysteine 43–cysteine 61.

The protein belongs to the beta-defensin family. In terms of tissue distribution, neutrophilic granules. Alveolar macrophages.

It localises to the secreted. In terms of biological role, has bactericidal activity. Active against E.coli ML35 but not against S.aureus 502A. This chain is Beta-defensin 5 (DEFB5), found in Bos taurus (Bovine).